Reading from the N-terminus, the 430-residue chain is C4-dicarboxylate transport protein (430 aa).

9 consecutive transmembrane segments (helical) span residues 8–28 (SLYFQVLAAITIGILLGHFYP), 44–64 (LIKMIIAPVIFCTVVTGIAGM), 76–96 (AALLYFEVVSTIALIIGLVVV), 144–164 (AFASGNILQVLLFAVMFGFAL), 184–204 (VIFGVINMIMKLAPLGAFGAM), 222–242 (LILCFYLTCILFVFLVLGSIA), 289–309 (VVGLVIPTGYSFNLDGTSIYL), 326–346 (IWHQITLLVVLLLSSKGAAGV), and 352–372 (IVLAATLSAVGHLPVAGLALI).

The protein belongs to the dicarboxylate/amino acid:cation symporter (DAACS) (TC 2.A.23) family.

It is found in the cell inner membrane. Functionally, responsible for the transport of dicarboxylates such as succinate, fumarate, and malate from the periplasm across the membrane. The chain is C4-dicarboxylate transport protein from Pectobacterium atrosepticum (strain SCRI 1043 / ATCC BAA-672) (Erwinia carotovora subsp. atroseptica).